A 629-amino-acid chain; its full sequence is Ribosomal protein S6 kinase 2 beta (629 aa).

One can recognise a Protein kinase 1 domain in the interval 62-321 (FVLLKVLGQG…AEELKRHPFF (260 aa)). Residues 68 to 76 (LGQGSFGKV) and Lys94 each bind ATP. The active-site Proton acceptor is the Asp187. A Phosphoserine modification is found at Ser221. The region spanning 322-391 (STIDWNKLYR…VAPVLVEEDA (70 aa)) is the AGC-kinase C-terminal domain. Phosphothreonine is present on Thr359. At Ser363 the chain carries Phosphoserine. Phosphoserine; by autocatalysis is present on Ser380. The Protein kinase 2 domain maps to 416–629 (YTVRETIGVG…PEEILARIGS (214 aa)). ATP contacts are provided by residues 422–430 (IGVGSYSVC) and Lys445. Residue Asp533 is the Proton acceptor of the active site. Thr571 is subject to Phosphothreonine.

The protein belongs to the protein kinase superfamily. AGC Ser/Thr protein kinase family. S6 kinase subfamily. The cofactor is Mg(2+). Autophosphorylated on Ser-380, as part of the activation process.

The enzyme catalyses L-seryl-[protein] + ATP = O-phospho-L-seryl-[protein] + ADP + H(+). It catalyses the reaction L-threonyl-[protein] + ATP = O-phospho-L-threonyl-[protein] + ADP + H(+). With respect to regulation, activated by multiple phosphorylations on threonine and serine residues. Functionally, serine/threonine kinase that may play a role in mediating the growth-factor and stress induced activation of transcription. The polypeptide is Ribosomal protein S6 kinase 2 beta (Xenopus laevis (African clawed frog)).